The primary structure comprises 146 residues: Deoxyuridine 5'-triphosphate nucleotidohydrolase (146 aa).

Substrate is bound by residues 66–68, asparagine 79, and 83–85; these read RSG and TID.

The protein belongs to the dUTPase family. The cofactor is Mg(2+).

The catalysed reaction is dUTP + H2O = dUMP + diphosphate + H(+). It participates in pyrimidine metabolism; dUMP biosynthesis; dUMP from dCTP (dUTP route): step 2/2. Functionally, this enzyme is involved in nucleotide metabolism: it produces dUMP, the immediate precursor of thymidine nucleotides and it decreases the intracellular concentration of dUTP so that uracil cannot be incorporated into DNA. The polypeptide is Deoxyuridine 5'-triphosphate nucleotidohydrolase (Citrifermentans bemidjiense (strain ATCC BAA-1014 / DSM 16622 / JCM 12645 / Bem) (Geobacter bemidjiensis)).